Reading from the N-terminus, the 183-residue chain is NAD(P)H-quinone oxidoreductase subunit J (183 aa).

Residues 1–21 (MAEENAQEKQAPPSAGEQSEP) form a disordered region.

It belongs to the complex I 30 kDa subunit family. As to quaternary structure, NDH-1 can be composed of about 15 different subunits; different subcomplexes with different compositions have been identified which probably have different functions.

Its subcellular location is the cellular thylakoid membrane. The catalysed reaction is a plastoquinone + NADH + (n+1) H(+)(in) = a plastoquinol + NAD(+) + n H(+)(out). It catalyses the reaction a plastoquinone + NADPH + (n+1) H(+)(in) = a plastoquinol + NADP(+) + n H(+)(out). NDH-1 shuttles electrons from an unknown electron donor, via FMN and iron-sulfur (Fe-S) centers, to quinones in the respiratory and/or the photosynthetic chain. The immediate electron acceptor for the enzyme in this species is believed to be plastoquinone. Couples the redox reaction to proton translocation, and thus conserves the redox energy in a proton gradient. Cyanobacterial NDH-1 also plays a role in inorganic carbon-concentration. This chain is NAD(P)H-quinone oxidoreductase subunit J, found in Synechococcus sp. (strain JA-2-3B'a(2-13)) (Cyanobacteria bacterium Yellowstone B-Prime).